We begin with the raw amino-acid sequence, 444 residues long: Methylenetetrahydrofolate--tRNA-(uracil-5-)-methyltransferase TrmFO (444 aa).

Residue 10–15 (GAGLAG) coordinates FAD.

It belongs to the MnmG family. TrmFO subfamily. Requires FAD as cofactor.

The protein localises to the cytoplasm. It catalyses the reaction uridine(54) in tRNA + (6R)-5,10-methylene-5,6,7,8-tetrahydrofolate + NADH + H(+) = 5-methyluridine(54) in tRNA + (6S)-5,6,7,8-tetrahydrofolate + NAD(+). It carries out the reaction uridine(54) in tRNA + (6R)-5,10-methylene-5,6,7,8-tetrahydrofolate + NADPH + H(+) = 5-methyluridine(54) in tRNA + (6S)-5,6,7,8-tetrahydrofolate + NADP(+). Functionally, catalyzes the folate-dependent formation of 5-methyl-uridine at position 54 (M-5-U54) in all tRNAs. The sequence is that of Methylenetetrahydrofolate--tRNA-(uracil-5-)-methyltransferase TrmFO from Streptococcus equi subsp. equi (strain 4047).